The following is a 602-amino-acid chain: Elongation factor 4 (602 aa).

Positions 6–188 (RNVRNFSIIA…RITEVVPEPA (183 aa)) constitute a tr-type G domain. GTP-binding positions include 18 to 23 (DHGKST) and 135 to 138 (NKID).

The protein belongs to the TRAFAC class translation factor GTPase superfamily. Classic translation factor GTPase family. LepA subfamily.

It is found in the cell membrane. It catalyses the reaction GTP + H2O = GDP + phosphate + H(+). Its function is as follows. Required for accurate and efficient protein synthesis under certain stress conditions. May act as a fidelity factor of the translation reaction, by catalyzing a one-codon backward translocation of tRNAs on improperly translocated ribosomes. Back-translocation proceeds from a post-translocation (POST) complex to a pre-translocation (PRE) complex, thus giving elongation factor G a second chance to translocate the tRNAs correctly. Binds to ribosomes in a GTP-dependent manner. This Oceanobacillus iheyensis (strain DSM 14371 / CIP 107618 / JCM 11309 / KCTC 3954 / HTE831) protein is Elongation factor 4.